The sequence spans 1214 residues: [F-actin]-monooxygenase mical1 (1214 aa).

The segment at 1 to 488 (MVNPLDSVNP…KRLYEAEEQE (488 aa)) is monooxygenase domain. FAD-binding positions include cysteine 96, 115–117 (EKR), 122–124 (RNN), phenylalanine 182, tyrosine 292, and aspartate 392. The segment at 484-505 (AEEQESKPNKLKKPDIKAKPRK) is disordered. Residues 508-614 (MKRLEELLSW…YLTQIRNALT (107 aa)) enclose the Calponin-homology (CH) domain. The tract at residues 649–676 (HKDRLASVKGPRQQNMKEKEEKKDVKEE) is disordered. A compositionally biased stretch (basic and acidic residues) spans 663-676 (NMKEKEEKKDVKEE). The LIM zinc-binding domain maps to 686–748 (EPCYFCKKHL…ELHSLAEEEE (63 aa)). Residues cysteine 688, cysteine 691, histidine 709, cysteine 712, cysteine 715, cysteine 718, cysteine 738, and histidine 741 each contribute to the Zn(2+) site. Positions 747–1019 (EEGDEGHGGA…DDEDEDEEDL (273 aa)) are disordered. A compositionally biased stretch (acidic residues) spans 796 to 815 (PDFDESTEFPAPDQDEPPDL). Residues 828–841 (SAENTNMENQQHNI) show a composition bias toward polar residues. A compositionally biased stretch (low complexity) spans 910–922 (RGSSSAASTSSSS). Positions 974 to 987 (SPWNLSSPRLQQRF) are enriched in polar residues. Acidic residues predominate over residues 1003-1019 (VSEDDNEDDEDEDEEDL). The region spanning 1053-1199 (KMTEIQRFHK…EVNDQFNSSL (147 aa)) is the bMERB domain. Positions 1061–1131 (HKAQSIQRRL…DLMVASRQLE (71 aa)) form a coiled coil. Residues 1194-1214 (QFNSSLDAKRRSTTASQVHWE) form a disordered region.

It belongs to the Mical family. FAD serves as cofactor.

The protein localises to the cytoplasm. Its subcellular location is the cytoskeleton. It localises to the midbody. It is found in the endosome membrane. The enzyme catalyses L-methionyl-[F-actin] + NADPH + O2 + H(+) = L-methionyl-(R)-S-oxide-[F-actin] + NADP(+) + H2O. It carries out the reaction NADPH + O2 + H(+) = H2O2 + NADP(+). Functionally, monooxygenase that promotes depolymerization of F-actin by mediating oxidation of specific methionine residues on actin to form methionine-sulfoxide, resulting in actin filament disassembly and prevent repolymerization. May be involved in endosomal tubule extension and neosynthesized protein export. In Danio rerio (Zebrafish), this protein is [F-actin]-monooxygenase mical1 (mical1).